A 222-amino-acid polypeptide reads, in one-letter code: MSSSDSIRMVLIGPPGAGKGTQAPNLVERFHAAHLATGDMLRSQISKGTELGLQAKKIMDQGGLVSDDIMVNMIKDELTNNPACKNGFILDGFPRTIPQAEKLDNMLKERGTPLEKAVELKIDDELLVARITGRLIHPASGRSYHKLFNPPKEDMKDDVTGEPLVQRSDDNEDALKKRLGAYHDQTEPIVDFYKKTGIWADVDASQPPETVWSAILKALGKN.

Position 16–21 (16–21 (GAGKGT)) interacts with ATP. The segment at 36 to 65 (ATGDMLRSQISKGTELGLQAKKIMDQGGLV) is NMP. AMP-binding positions include Thr-37, Arg-42, 63–65 (GLV), 92–95 (GFPR), and Gln-99. The LID stretch occupies residues 133–170 (GRLIHPASGRSYHKLFNPPKEDMKDDVTGEPLVQRSDD). ATP contacts are provided by residues Arg-134 and 143 to 144 (SY). Positions 167 and 178 each coordinate AMP. Gln-206 serves as a coordination point for ATP.

The protein belongs to the adenylate kinase family. AK2 subfamily. As to quaternary structure, monomer.

The protein localises to the cytoplasm. The protein resides in the cytosol. It localises to the mitochondrion intermembrane space. It carries out the reaction AMP + ATP = 2 ADP. Functionally, catalyzes the reversible transfer of the terminal phosphate group between ATP and AMP. Plays an important role in cellular energy homeostasis and in adenine nucleotide metabolism. Adenylate kinase activity is critical for regulation of the phosphate utilization and the AMP de novo biosynthesis pathways. The polypeptide is Adenylate kinase (Candida glabrata (strain ATCC 2001 / BCRC 20586 / JCM 3761 / NBRC 0622 / NRRL Y-65 / CBS 138) (Yeast)).